The primary structure comprises 234 residues: Small ribosomal subunit protein uS2 (234 aa).

This sequence belongs to the universal ribosomal protein uS2 family.

This is Small ribosomal subunit protein uS2 from Prochlorococcus marinus (strain AS9601).